A 914-amino-acid chain; its full sequence is Protein translocase subunit SecA (914 aa).

ATP-binding positions include glutamine 87, 105–109, and aspartate 500; that span reads GEGKT. Zn(2+) is bound by residues cysteine 898, cysteine 900, cysteine 909, and histidine 910.

This sequence belongs to the SecA family. As to quaternary structure, monomer and homodimer. Part of the essential Sec protein translocation apparatus which comprises SecA, SecYEG and auxiliary proteins SecDF-YajC and YidC. Zn(2+) is required as a cofactor.

The protein localises to the cell inner membrane. Its subcellular location is the cytoplasm. It carries out the reaction ATP + H2O + cellular proteinSide 1 = ADP + phosphate + cellular proteinSide 2.. In terms of biological role, part of the Sec protein translocase complex. Interacts with the SecYEG preprotein conducting channel. Has a central role in coupling the hydrolysis of ATP to the transfer of proteins into and across the cell membrane, serving as an ATP-driven molecular motor driving the stepwise translocation of polypeptide chains across the membrane. The protein is Protein translocase subunit SecA of Acidithiobacillus ferrooxidans (strain ATCC 23270 / DSM 14882 / CIP 104768 / NCIMB 8455) (Ferrobacillus ferrooxidans (strain ATCC 23270)).